The following is a 129-amino-acid chain: Large-conductance mechanosensitive channel (129 aa).

A run of 3 helical transmembrane segments spans residues 8–28, 30–50, and 67–87; these read FIMRGNAIDLAVGVVMGAAFT, IVKSIVTNLIGPIIGIFAGAV, and GAVLNQVINFIIVGFIIFLII.

The protein belongs to the MscL family. As to quaternary structure, homopentamer.

It is found in the cell membrane. In terms of biological role, channel that opens in response to stretch forces in the membrane lipid bilayer. May participate in the regulation of osmotic pressure changes within the cell. The chain is Large-conductance mechanosensitive channel from Oenococcus oeni (strain ATCC BAA-331 / PSU-1).